The primary structure comprises 3061 residues: Genome polyprotein (3061 aa).

Residues 141 to 284 enclose the Peptidase S30 domain; the sequence is KLTEGQMNHL…QGVMDSMVQF (144 aa). Catalysis depends on for P1 proteinase activity residues His-192, Asp-201, and Ser-235. The short motif at 334–337 is the Involved in interaction with stylet and aphid transmission element; sequence KITC. The short motif at 592 to 594 is the Involved in virions binding and aphid transmission element; the sequence is PTK. In terms of domain architecture, Peptidase C6 spans 618 to 740; that stretch reads LYIARQGFCY…ESDIKHYRVG (123 aa). Residues Cys-626 and His-699 each act as for helper component proteinase activity in the active site. The 153-residue stretch at 1229–1381 folds into the Helicase ATP-binding domain; the sequence is DIAHSEHLDF…TQQPVKLIVE (153 aa). Position 1242–1249 (1242–1249) interacts with ATP; sequence GAVGSGKS. The DECH box signature appears at 1331-1334; that stretch reads DECH. The Helicase C-terminal domain occupies 1400–1559; the sequence is DVVQFGSNVL…NLPVMTGGVS (160 aa). The Nuclear localization signal motif lies at 1884-1892; it reads RKKGKGKGT. Tyr-1907 is modified (O-(5'-phospho-RNA)-tyrosine). Positions 2032 to 2250 constitute a Peptidase C4 domain; sequence AKSLMRGLRD…VLWGPLKLKE (219 aa). Residues His-2077, Asp-2112, and Cys-2182 each act as for nuclear inclusion protein A activity in the active site. The RdRp catalytic domain maps to 2517–2641; sequence WVYCDADGSQ…AVNPEKESIL (125 aa). The disordered stretch occupies residues 2795 to 2835; that stretch reads GNDTIDAGGSTKKDAKQEQGSIQPNLNKEKEKDVNVGTSGT. At Thr-3044 the chain carries Phosphothreonine.

This sequence belongs to the potyviridae genome polyprotein family. In terms of assembly, interacts with host eIF4E protein (via cap-binding region); this interaction mediates the translation of the VPg-viral RNA conjugates. Part of a complex that comprises VPg, RNA, host EIF4E and EIF4G; this interaction mediates the translation of the VPg-viral RNA conjugates. Post-translationally, VPg is uridylylated by the polymerase and is covalently attached to the 5'-end of the genomic RNA. This uridylylated form acts as a nucleotide-peptide primer for the polymerase. In terms of processing, potyviral RNA is expressed as two polyproteins which undergo post-translational proteolytic processing. Genome polyprotein is processed by NIa-pro, P1 and HC-pro proteinases resulting in the production of at least ten individual proteins. P3N-PIPO polyprotein is cleaved by P1 and HC-pro proteinases resulting in the production of three individual proteins. The P1 proteinase and the HC-pro cleave only their respective C-termini autocatalytically. 6K1 is essential for proper proteolytic separation of P3 from CI.

It localises to the host cytoplasmic vesicle. The protein localises to the host nucleus. It is found in the virion. It carries out the reaction RNA(n) + a ribonucleoside 5'-triphosphate = RNA(n+1) + diphosphate. It catalyses the reaction Hydrolyzes glutaminyl bonds, and activity is further restricted by preferences for the amino acids in P6 - P1' that vary with the species of potyvirus, e.g. Glu-Xaa-Xaa-Tyr-Xaa-Gln-|-(Ser or Gly) for the enzyme from tobacco etch virus. The natural substrate is the viral polyprotein, but other proteins and oligopeptides containing the appropriate consensus sequence are also cleaved.. The catalysed reaction is Hydrolyzes a Gly-|-Gly bond at its own C-terminus, commonly in the sequence -Tyr-Xaa-Val-Gly-|-Gly, in the processing of the potyviral polyprotein.. Functionally, required for aphid transmission and also has proteolytic activity. Only cleaves a Gly-Gly dipeptide at its own C-terminus. Interacts with virions and aphid stylets. Acts as a suppressor of RNA-mediated gene silencing, also known as post-transcriptional gene silencing (PTGS), a mechanism of plant viral defense that limits the accumulation of viral RNAs. May have RNA-binding activity. Its function is as follows. Has helicase activity. It may be involved in replication. In terms of biological role, indispensable for virus replication. Reduces the abundance of host transcripts related to jasmonic acid biosynthesis therefore altering the host defenses. In order to increase its own stability, decreases host protein degradation pathways. Indispensable for virus replication. Functionally, mediates the cap-independent, EIF4E-dependent translation of viral genomic RNAs. Binds to the cap-binding site of host EIF4E and thus interferes with the host EIF4E-dependent mRNA export and translation. VPg-RNA directly binds EIF4E and is a template for transcription. Also forms trimeric complexes with EIF4E-EIF4G, which are templates for translation. Its function is as follows. Has RNA-binding and proteolytic activities. In terms of biological role, an RNA-dependent RNA polymerase that plays an essential role in the virus replication. Involved in aphid transmission, cell-to-cell and systemis movement, encapsidation of the viral RNA and in the regulation of viral RNA amplification. This is Genome polyprotein from Potato virus Y (strain Hungarian) (PVY).